The sequence spans 845 residues: Beta-glucosidase B (845 aa).

N-linked (GlcNAc...) asparagine glycosylation occurs at N202. D230 is an active-site residue. N-linked (GlcNAc...) asparagine glycosylation occurs at N235. The PA14 domain occupies 406–557; that stretch reads EGQPGWTLDF…HNRDLLSEAV (152 aa). Residues N591, N612, and N794 are each glycosylated (N-linked (GlcNAc...) asparagine).

The protein belongs to the glycosyl hydrolase 3 family.

The catalysed reaction is Hydrolysis of terminal, non-reducing beta-D-glucosyl residues with release of beta-D-glucose.. The protein operates within glycan metabolism; cellulose degradation. Beta-glucosidases are one of a number of cellulolytic enzymes involved in the degradation of cellulosic biomass. Catalyzes the last step releasing glucose from the inhibitory cellobiose. This is Beta-glucosidase B (bglB) from Emericella nidulans (strain FGSC A4 / ATCC 38163 / CBS 112.46 / NRRL 194 / M139) (Aspergillus nidulans).